The following is a 154-amino-acid chain: Putative pre-16S rRNA nuclease (154 aa).

This sequence belongs to the YqgF nuclease family.

The protein resides in the cytoplasm. Functionally, could be a nuclease involved in processing of the 5'-end of pre-16S rRNA. The polypeptide is Putative pre-16S rRNA nuclease (Rickettsia bellii (strain OSU 85-389)).